A 367-amino-acid chain; its full sequence is Glutamate 5-kinase (367 aa).

K10 provides a ligand contact to ATP. Substrate is bound by residues S50, D137, and N149. Residues 169–170 and 211–217 contribute to the ATP site; these read TD and TGGMSTK. One can recognise a PUA domain in the interval 275-353; that stretch reads AGEITVDEGA…QQIDAILGYE (79 aa).

This sequence belongs to the glutamate 5-kinase family.

Its subcellular location is the cytoplasm. It catalyses the reaction L-glutamate + ATP = L-glutamyl 5-phosphate + ADP. It functions in the pathway amino-acid biosynthesis; L-proline biosynthesis; L-glutamate 5-semialdehyde from L-glutamate: step 1/2. In terms of biological role, catalyzes the transfer of a phosphate group to glutamate to form L-glutamate 5-phosphate. The polypeptide is Glutamate 5-kinase (Salmonella paratyphi A (strain ATCC 9150 / SARB42)).